The following is a 257-amino-acid chain: AN1-type zinc finger protein 2B (257 aa).

AN1-type zinc fingers lie at residues 4–52 (PDLG…QKDI) and 94–142 (KIFT…HPTS). Residues cysteine 10, cysteine 15, cysteine 25, cysteine 28, cysteine 33, histidine 36, histidine 42, cysteine 44, cysteine 100, cysteine 105, cysteine 115, cysteine 118, cysteine 123, histidine 126, histidine 132, and cysteine 134 each coordinate Zn(2+). The VCP/p97-interacting motif (VIM) stretch occupies residues 141–151 (TSRAGLAAISR). A disordered region spans residues 153–187 (QAVASTSTVPSPSQTMPSCTSPSRATTRSPSWTAP). The segment covering 155–171 (VASTSTVPSPSQTMPSC) has biased composition (polar residues). Phosphoserine is present on residues serine 163 and serine 173. Over residues 172-186 (TSPSRATTRSPSWTA) the composition is skewed to low complexity. 2 consecutive UIM domains span residues 197-216 (SEDE…TKPQ) and 221-240 (QEEE…AEYQ). Residue cysteine 254 is modified to Cysteine methyl ester. Cysteine 254 is lipidated: S-geranylgeranyl cysteine. Residues 254–257 (CSLC) carry the CAAX motif motif. Positions 255 to 257 (SLC) are cleaved as a propeptide — removed in mature form.

As to quaternary structure, binds 'Lys-48'-linked polyubiquitin chains of ubiquitinated proteins. Associates with the proteasome complex; upon exposure to arsenite. Interacts (via VIM motif) with VCP; the interaction is direct. Interacts with BAG6. Interacts with IGF1R (nascent precursor form). Interacts with DERL1, FAF2, NPLOC4 and UFD1; probably through VCP. Phosphorylated by MAPK14. Phosphorylation has no effect on association with the proteasome complex.

It localises to the endoplasmic reticulum membrane. Functionally, plays a role in protein homeostasis by regulating both the translocation and the ubiquitin-mediated proteasomal degradation of nascent proteins at the endoplasmic reticulum. It is involved in the regulation of signal-mediated translocation of proteins into the endoplasmic reticulum. It also plays a role in the ubiquitin-mediated proteasomal degradation of proteins for which signal-mediated translocation to the endoplasmic reticulum has failed. May therefore function in the endoplasmic reticulum stress-induced pre-emptive quality control, a mechanism that selectively attenuates the translocation of newly synthesized proteins into the endoplasmic reticulum and reroutes them to the cytosol for proteasomal degradation. By controlling the steady-state expression of the IGF1R receptor, indirectly regulates the insulin-like growth factor receptor signaling pathway. The polypeptide is AN1-type zinc finger protein 2B (Homo sapiens (Human)).